A 301-amino-acid chain; its full sequence is Formamidopyrimidine-DNA glycosylase (301 aa).

The active-site Schiff-base intermediate with DNA is the proline 2. The Proton donor role is filled by glutamate 3. Catalysis depends on lysine 58, which acts as the Proton donor; for beta-elimination activity. Residues histidine 109, arginine 131, and lysine 174 each contribute to the DNA site. The FPG-type zinc-finger motif lies at 265–301 (SVYDREGQACRTPGCGGTVARIVQAGRSTFYCATCQK). Arginine 291 (proton donor; for delta-elimination activity) is an active-site residue.

This sequence belongs to the FPG family. In terms of assembly, monomer. It depends on Zn(2+) as a cofactor.

The catalysed reaction is Hydrolysis of DNA containing ring-opened 7-methylguanine residues, releasing 2,6-diamino-4-hydroxy-5-(N-methyl)formamidopyrimidine.. It catalyses the reaction 2'-deoxyribonucleotide-(2'-deoxyribose 5'-phosphate)-2'-deoxyribonucleotide-DNA = a 3'-end 2'-deoxyribonucleotide-(2,3-dehydro-2,3-deoxyribose 5'-phosphate)-DNA + a 5'-end 5'-phospho-2'-deoxyribonucleoside-DNA + H(+). Its function is as follows. Involved in base excision repair of DNA damaged by oxidation or by mutagenic agents. Acts as a DNA glycosylase that recognizes and removes damaged bases. Has a preference for oxidized purines, such as 7,8-dihydro-8-oxoguanine (8-oxoG). Has AP (apurinic/apyrimidinic) lyase activity and introduces nicks in the DNA strand. Cleaves the DNA backbone by beta-delta elimination to generate a single-strand break at the site of the removed base with both 3'- and 5'-phosphates. In Rhizobium leguminosarum bv. trifolii (strain WSM2304), this protein is Formamidopyrimidine-DNA glycosylase.